An 810-amino-acid polypeptide reads, in one-letter code: Protein kinase C-binding protein NELL1 (810 aa).

The first 21 residues, 1 to 21, serve as a signal peptide directing secretion; sequence MPMDLILVVWFCVCTARTVVG. N-linked (GlcNAc...) asparagine glycosylation is found at Asn-40, Asn-53, Asn-83, Asn-224, Asn-294, and Asn-372. The Laminin G-like domain maps to 64-227; that stretch reads EREIHAAPHV…TQCPNLNHTC (164 aa). The VWFC 1 domain maps to 271–332; the sequence is KTCQVSGLLY…IAGQCCKVCR (62 aa). 3 disulfides stabilise this stretch: Cys-395–Cys-407, Cys-401–Cys-416, and Cys-418–Cys-432. Positions 434, 435, and 437 each coordinate Ca(2+). An EGF-like 1; calcium-binding domain is found at 434–475; it reads DIDECAAKMHYCHANTVCVNLPGLYRCDCVPGYIRVDDFSCT. 15 cysteine pairs are disulfide-bonded: Cys-438-Cys-451, Cys-445-Cys-460, Cys-462-Cys-474, Cys-480-Cys-493, Cys-487-Cys-502, Cys-504-Cys-515, Cys-519-Cys-529, Cys-523-Cys-535, Cys-537-Cys-546, Cys-553-Cys-566, Cys-560-Cys-575, Cys-577-Cys-594, Cys-600-Cys-613, Cys-607-Cys-622, and Cys-624-Cys-630. 3 residues coordinate Ca(2+): Asn-453, Leu-454, and Leu-457. The 41-residue stretch at 476-516 folds into the EGF-like 2; calcium-binding domain; sequence EHDECGSGQHNCDENAICTNTVQGHSCTCKPGYVGNGTICR. The N-linked (GlcNAc...) asparagine glycan is linked to Asn-511. The EGF-like 3 domain maps to 517–547; it reads AFCEEGCRYGGTCVAPNKCVCPSGFTGSHCE. In terms of domain architecture, EGF-like 4; calcium-binding spans 549–587; it reads DIDECSEGIIECHNHSRCVNLPGWYHCECRSGFHDDGTY. Asn-562 carries an N-linked (GlcNAc...) asparagine glycan. Residues 596-631 enclose the EGF-like 5; calcium-binding domain; the sequence is DIDECALRTHTCWNDSACINLAGGFDCLCPSGPSCS. Asn-609 carries an N-linked (GlcNAc...) asparagine glycan. The 59-residue stretch at 692–750 folds into the VWFC 2 domain; the sequence is SQCLDQNGHKLYRSGDNWTHSCQQCRCLEGEVDCWPLTCPNLSCEYTAILEGECCPRCV. Residues Asn-708, Asn-732, and Asn-758 are each glycosylated (N-linked (GlcNAc...) asparagine).

In terms of assembly, homotrimer. Binds to PKC beta-1. Interacts with ATRAID; the interaction promotes osteoblast cell differentiation and mineralization. Interacts with ROBO3.

The protein resides in the cytoplasm. The protein localises to the nucleus envelope. Its subcellular location is the secreted. Its function is as follows. Plays a role in the control of cell growth and differentiation. Promotes osteoblast cell differentiation and terminal mineralization. This chain is Protein kinase C-binding protein NELL1 (NELL1), found in Homo sapiens (Human).